We begin with the raw amino-acid sequence, 198 residues long: Probable GTP-binding protein EngB (198 aa).

An EngB-type G domain is found at 27–198; the sequence is DLPEVALAGR…ESWDTILSEL (172 aa). Residues 35–42, 62–66, 80–83, 147–150, and 179–181 each bind GTP; these read GRSNVGKS, GKTQL, DVPG, TKAD, and FSS. Positions 42 and 64 each coordinate Mg(2+).

Belongs to the TRAFAC class TrmE-Era-EngA-EngB-Septin-like GTPase superfamily. EngB GTPase family. The cofactor is Mg(2+).

In terms of biological role, necessary for normal cell division and for the maintenance of normal septation. In Streptococcus agalactiae serotype Ia (strain ATCC 27591 / A909 / CDC SS700), this protein is Probable GTP-binding protein EngB.